Reading from the N-terminus, the 489-residue chain is Envelope glycoprotein C homolog (489 aa).

The first 32 residues, 1–32 (MVSNMRVLRVLRLTGWVGIFLVLSLQQTSCAG), serve as a signal peptide directing secretion. Residues 33-455 (LPHNVDTHHI…YYDATPSARG (423 aa)) are Virion surface-facing. The interval 59-94 (EVPNSPTTELSTTVATKTAVPTTESTSSSEAHRNSS) is disordered. Residues 60–69 (VPNSPTTELS) show a composition bias toward polar residues. Positions 70–81 (TTVATKTAVPTT) are enriched in low complexity. Asn92, Asn112, Asn204, Asn346, and Asn392 each carry an N-linked (GlcNAc...) asparagine; by host glycan. In terms of domain architecture, Ig-like spans 250–348 (PASVDVLAPP…GDMISTSNAT (99 aa)). Residues 456–486 (MPMIVTITAVLGLALFLGIGIIITALCFYLP) traverse the membrane as a helical segment. At 487 to 489 (GRN) the chain is on the cytoplasmic side.

The protein belongs to the herpesviridae glycoprotein C family.

It localises to the virion membrane. The sequence is that of Envelope glycoprotein C homolog (gC) from Gallus gallus (Chicken).